The primary structure comprises 292 residues: Transcription factor-like protein DPA (292 aa).

The disordered stretch occupies residues 1-25 (MSMEMELFVTPEKQRQHPSVSVEKT). A DNA-binding region spans residues 51-135 (GGGLRQFSVM…KKEIRWKGLP (85 aa)). A DEF box motif is present at residues 101 to 135 (NEKNIRRRVYDALNVFMALDIIARDKKEIRWKGLP). Positions 163–184 (LKELREKVSSLESLMSRNQEMV) form a coiled coil. Residues 246-280 (QEQNRVSSSSSTHHQSQHSSAHSSSSSCIASGTSG) form a disordered region. Positions 252–280 (SSSSSTHHQSQHSSAHSSSSSCIASGTSG) are enriched in low complexity.

The protein belongs to the E2F/DP family. Heterodimer with E2F. Interacts preferentially with E2FA and E2FB, but also with E2FC. As to expression, strongly expressed in the actively dividing tissues of the shoot apical meristem, young leaf primordia, the vascular tissues of the maturing leaf primordia and axillary buds.

The protein localises to the cytoplasm. Its subcellular location is the nucleus. Involved in the regulation of the G1/S transition. Increases the DNA binding and the transactivation activities of E2F proteins after heterodimerization. The complex DPA/E2FA promotes cell division and acts as a regulator of the endocycle. Positively regulates the activity of S phase-specific genes. The chain is Transcription factor-like protein DPA (DPA) from Arabidopsis thaliana (Mouse-ear cress).